The following is a 235-amino-acid chain: Urease accessory protein UreF (235 aa).

Belongs to the UreF family. UreD, UreF and UreG form a complex that acts as a GTP-hydrolysis-dependent molecular chaperone, activating the urease apoprotein by helping to assemble the nickel containing metallocenter of UreC. The UreE protein probably delivers the nickel.

Its subcellular location is the cytoplasm. Functionally, required for maturation of urease via the functional incorporation of the urease nickel metallocenter. The chain is Urease accessory protein UreF from Haemophilus influenzae (strain PittEE).